Consider the following 223-residue polypeptide: MPSRLDARATRHYFDSAFHCPAVKVLPNEYYVAAGEDIMISTVLGSCVAACIRDPRAGVGGMNHFMLPEGDGDSPSSATMRYGAFAMEVLINELLKAGAARERLEAKVFGGGAVLSAMQQMNIGERNARFVLNYLNTEGIPVLAQDLGDVHARRIGYFPRDGRVMVRRLAPHHHKAEVLIAQREQVAAQTASAKAHTPPQIERFSAPAKPRFERFTRPSTATS.

The tract at residues 189 to 223 is disordered; it reads QTASAKAHTPPQIERFSAPAKPRFERFTRPSTATS.

It belongs to the CheD family.

It carries out the reaction L-glutaminyl-[protein] + H2O = L-glutamyl-[protein] + NH4(+). Probably deamidates glutamine residues to glutamate on methyl-accepting chemotaxis receptors (MCPs), playing an important role in chemotaxis. This Bordetella petrii (strain ATCC BAA-461 / DSM 12804 / CCUG 43448) protein is Probable chemoreceptor glutamine deamidase CheD.